The sequence spans 170 residues: Large ribosomal subunit protein bL17 (170 aa).

Positions 134–144 are enriched in low complexity; sequence ASAKAAQAQEK. The disordered stretch occupies residues 134-170; sequence ASAKAAQAQEKPAQEEEVEATSDEVAYTSEPDKAAEH.

This sequence belongs to the bacterial ribosomal protein bL17 family. Part of the 50S ribosomal subunit. Contacts protein L32.

The protein is Large ribosomal subunit protein bL17 of Mycobacterium leprae (strain Br4923).